Consider the following 346-residue polypeptide: uncharacterized protein (346 aa).

A disordered region spans residues 322–346 (GRDGGYRETTSPPTGRGRNVRGSHA).

This is an uncharacterized protein from Mycobacterium tuberculosis (strain CDC 1551 / Oshkosh).